Here is a 65-residue protein sequence, read N- to C-terminus: Conotoxin mr5.1b (65 aa).

The first 19 residues, 1 to 19, serve as a signal peptide directing secretion; sequence MRCVPVFVILLLLIASAPS. Positions 20–48 are excised as a propeptide; it reads VDARLKTKDDMPLPSSHANIKRTLQMLRN. A 4-carboxyglutamate modification is found at Glu60.

This sequence belongs to the conotoxin T superfamily. Post-translationally, contains 2 disulfide bonds that can be either 'C1-C3, C2-C4' or 'C1-C4, C2-C3', since these disulfide connectivities have been observed for conotoxins with cysteine framework V (for examples, see AC P0DQQ7 and AC P81755). In terms of tissue distribution, expressed by the venom duct.

The protein localises to the secreted. The polypeptide is Conotoxin mr5.1b (Conus marmoreus (Marble cone)).